The primary structure comprises 63 residues: Protein D-63 (63 aa).

Homodimer.

Its function is as follows. This protein may be involved in virus assembly. In Saccharolobus solfataricus (Sulfolobus solfataricus), this protein is Protein D-63.